Consider the following 210-residue polypeptide: Putative protein-lysine deacylase ABHD14B (210 aa).

Phosphoserine is present on Ser-91. Residues Ser-111, Asp-162, and His-188 each act as charge relay system in the active site.

This sequence belongs to the AB hydrolase superfamily. ABHD14 family. As to quaternary structure, may interact with TAF1.

It localises to the cytoplasm. It is found in the nucleus. It carries out the reaction L-lysyl-[protein] + acetyl-CoA = N(6)-acetyl-L-lysyl-[protein] + CoA + H(+). Its function is as follows. Acts as an atypical protein-lysine deacetylase in vitro. Catalyzes the deacetylation of lysine residues using CoA as substrate, generating acetyl-CoA and the free amine of protein-lysine residues. Additional experiments are however required to confirm the protein-lysine deacetylase activity in vivo. Has hydrolase activity towards various surrogate p-nitrophenyl (pNp) substrates, such as pNp-butyrate, pNp-acetate and pNp-octanoate in vitro, with a strong preference for pNp-acetate. May activate transcription. The sequence is that of Putative protein-lysine deacylase ABHD14B from Rattus norvegicus (Rat).